Here is a 364-residue protein sequence, read N- to C-terminus: DNA polymerase IV (364 aa).

The UmuC domain maps to 14-198 (IIHIDMDAFF…LPIEKFHGVG (185 aa)). Residues Asp18 and Asp116 each contribute to the Mg(2+) site. The active site involves Glu117.

It belongs to the DNA polymerase type-Y family. In terms of assembly, monomer. The cofactor is Mg(2+).

The protein resides in the cytoplasm. It carries out the reaction DNA(n) + a 2'-deoxyribonucleoside 5'-triphosphate = DNA(n+1) + diphosphate. Poorly processive, error-prone DNA polymerase involved in untargeted mutagenesis. Copies undamaged DNA at stalled replication forks, which arise in vivo from mismatched or misaligned primer ends. These misaligned primers can be extended by PolIV. Exhibits no 3'-5' exonuclease (proofreading) activity. May be involved in translesional synthesis, in conjunction with the beta clamp from PolIII. The sequence is that of DNA polymerase IV from Streptococcus pyogenes serotype M18 (strain MGAS8232).